The primary structure comprises 506 residues: Maturase K (506 aa).

Belongs to the intron maturase 2 family. MatK subfamily.

The protein resides in the plastid. The protein localises to the chloroplast. Usually encoded in the trnK tRNA gene intron. Probably assists in splicing its own and other chloroplast group II introns. This Medicago sativa (Alfalfa) protein is Maturase K.